The chain runs to 306 residues: Glutaminase (306 aa).

Substrate contacts are provided by serine 64, asparagine 115, glutamate 159, asparagine 166, tyrosine 190, tyrosine 242, and valine 260.

The protein belongs to the glutaminase family. In terms of assembly, homotetramer.

It carries out the reaction L-glutamine + H2O = L-glutamate + NH4(+). This chain is Glutaminase, found in Aliivibrio salmonicida (strain LFI1238) (Vibrio salmonicida (strain LFI1238)).